The following is a 411-amino-acid chain: Aspartokinase (411 aa).

Residue 7-10 coordinates ATP; it reads KFGG. Residue 25 to 30 coordinates substrate; sequence RVIEEK. Residue S41 participates in ATP binding. Substrate-binding positions include 47-49, E74, 125-126, 150-153, and S153; these read TDE, LN, and RGGS. ATP is bound by residues 173-174 and 179-184; these read TD and FTTDPR. 2 ACT domains span residues 264-338 and 344-411; these read VTVF…SETG and IVGS…KSER. Substrate-binding positions include 289-291, Q295, 355-356, 369-370, and 376-377; these read NVD, VA, QV, and SE.

The protein belongs to the aspartokinase family. Tetramer consisting of 2 isoforms Alpha (catalytic and regulation) and of a homodimer of 2 isoforms Beta (regulation).

It catalyses the reaction L-aspartate + ATP = 4-phospho-L-aspartate + ADP. It functions in the pathway amino-acid biosynthesis; L-lysine biosynthesis via DAP pathway; (S)-tetrahydrodipicolinate from L-aspartate: step 1/4. Its pathway is amino-acid biosynthesis; L-methionine biosynthesis via de novo pathway; L-homoserine from L-aspartate: step 1/3. It participates in amino-acid biosynthesis; L-threonine biosynthesis; L-threonine from L-aspartate: step 1/5. Lysine-sensitive. Functionally, catalyzes the phosphorylation of the beta-carboxyl group of aspartic acid with ATP to yield 4-phospho-L-aspartate, which is involved in the branched biosynthetic pathway leading to the biosynthesis of amino acids threonine, isoleucine and methionine. The protein is Aspartokinase (lysC) of Bacillus sp. (strain MGA3).